A 190-amino-acid polypeptide reads, in one-letter code: Pyridoxal 5'-phosphate synthase subunit PdxT (190 aa).

46-48 contacts L-glutamine; it reads GES. Cysteine 78 functions as the Nucleophile in the catalytic mechanism. L-glutamine-binding positions include arginine 105 and 133-134; that span reads IR. Active-site charge relay system residues include histidine 169 and glutamate 171.

The protein belongs to the glutaminase PdxT/SNO family. As to quaternary structure, in the presence of PdxS, forms a dodecamer of heterodimers. Only shows activity in the heterodimer.

It carries out the reaction aldehydo-D-ribose 5-phosphate + D-glyceraldehyde 3-phosphate + L-glutamine = pyridoxal 5'-phosphate + L-glutamate + phosphate + 3 H2O + H(+). The catalysed reaction is L-glutamine + H2O = L-glutamate + NH4(+). The protein operates within cofactor biosynthesis; pyridoxal 5'-phosphate biosynthesis. Its function is as follows. Catalyzes the hydrolysis of glutamine to glutamate and ammonia as part of the biosynthesis of pyridoxal 5'-phosphate. The resulting ammonia molecule is channeled to the active site of PdxS. The sequence is that of Pyridoxal 5'-phosphate synthase subunit PdxT from Niallia circulans (Bacillus circulans).